Here is a 105-residue protein sequence, read N- to C-terminus: Phosphoribosyl-AMP cyclohydrolase (105 aa).

Asp72 contributes to the Mg(2+) binding site. Residue Cys73 participates in Zn(2+) binding. Mg(2+)-binding residues include Asp74 and Asp76. The Zn(2+) site is built by Cys89 and Cys96.

It belongs to the PRA-CH family. Homodimer. The cofactor is Mg(2+). Zn(2+) is required as a cofactor.

It is found in the cytoplasm. The enzyme catalyses 1-(5-phospho-beta-D-ribosyl)-5'-AMP + H2O = 1-(5-phospho-beta-D-ribosyl)-5-[(5-phospho-beta-D-ribosylamino)methylideneamino]imidazole-4-carboxamide. The protein operates within amino-acid biosynthesis; L-histidine biosynthesis; L-histidine from 5-phospho-alpha-D-ribose 1-diphosphate: step 3/9. In terms of biological role, catalyzes the hydrolysis of the adenine ring of phosphoribosyl-AMP. This chain is Phosphoribosyl-AMP cyclohydrolase, found in Listeria monocytogenes serotype 4a (strain HCC23).